We begin with the raw amino-acid sequence, 673 residues long: NACHT, LRR and PYD domains-containing protein 10 (673 aa).

A Pyrin domain is found at M1–N92. One can recognise an NACHT domain in the interval P163 to Q469. G169–T176 contacts ATP. Positions S578 to G673 are disordered. Residues V584–S597 are compositionally biased toward low complexity. Positions A633–G648 are enriched in basic and acidic residues. Residues G649–G658 are compositionally biased toward acidic residues. A compositionally biased stretch (basic and acidic residues) spans Q659 to G673.

This sequence belongs to the NLRP family. In terms of assembly, oligomerizes. Interacts with PYCARD. Also interacts with CASP1 and IL1B. Interacts with NOD1 and components of the NOD1 signaling pathway including RIPK2, NR2C2/TAK1 and IKBKG/NEMO. As to expression, expressed in skin, tongue, heart, colon and several cell lines of hematopoietic and myocytic origin but not in kidney, skeletal muscle, spleen, liver, lung, thymus, brain or small intestine (at protein level).

The protein resides in the cytoplasm. Its subcellular location is the cell membrane. In terms of biological role, inhibits autoprocessing of CASP1, CASP1-dependent IL1B secretion, PYCARD aggregation and PYCARD-mediated apoptosis but not apoptosis induced by FAS or BID. Displays anti-inflammatory activity. Required for immunity against C.albicans infection. Involved in the innate immune response by contributing to pro-inflammatory cytokine release in response to invasive bacterial infection. Contributes to T-cell-mediated inflammatory responses in the skin. Plays a role in protection against periodontitis through its involvement in induction of IL1A via ERK activation in oral epithelial cells infected with periodontal pathogens. Exhibits both ATPase and GTPase activities. In Mus musculus (Mouse), this protein is NACHT, LRR and PYD domains-containing protein 10 (Nlrp10).